Here is a 302-residue protein sequence, read N- to C-terminus: Probable 2-(5''-triphosphoribosyl)-3'-dephosphocoenzyme-A synthase (302 aa).

Belongs to the CitG/MdcB family.

It catalyses the reaction 3'-dephospho-CoA + ATP = 2'-(5''-triphospho-alpha-D-ribosyl)-3'-dephospho-CoA + adenine. This is Probable 2-(5''-triphosphoribosyl)-3'-dephosphocoenzyme-A synthase from Albidiferax ferrireducens (strain ATCC BAA-621 / DSM 15236 / T118) (Rhodoferax ferrireducens).